The chain runs to 100 residues: NADH-quinone oxidoreductase subunit K 2 (100 aa).

3 helical membrane passes run Leu2 to Val22, Ile29 to Phe49, and Phe61 to Ile81.

The protein belongs to the complex I subunit 4L family. NDH-1 is composed of 14 different subunits. Subunits NuoA, H, J, K, L, M, N constitute the membrane sector of the complex.

The protein localises to the cell inner membrane. It catalyses the reaction a quinone + NADH + 5 H(+)(in) = a quinol + NAD(+) + 4 H(+)(out). Its function is as follows. NDH-1 shuttles electrons from NADH, via FMN and iron-sulfur (Fe-S) centers, to quinones in the respiratory chain. The immediate electron acceptor for the enzyme in this species is believed to be ubiquinone. Couples the redox reaction to proton translocation (for every two electrons transferred, four hydrogen ions are translocated across the cytoplasmic membrane), and thus conserves the redox energy in a proton gradient. This is NADH-quinone oxidoreductase subunit K 2 from Geobacter sp. (strain M21).